The sequence spans 221 residues: Succinate--CoA ligase [ADP-forming] subunit beta, mitochondrial (221 aa).

An ATP-grasp domain is found at 1-122 (DVVIKAQVLA…DSNSAYRQKI (122 aa)). Position 5 (Lys5) interacts with ATP. Residues Lys22 and Lys26 each carry the N6-acetyllysine modification. Ser114 is modified (phosphoserine). Position 139 is a phosphothreonine (Thr139). 171–173 (GIM) is a binding site for substrate. The residue at position 196 (Lys196) is an N6-acetyllysine.

This sequence belongs to the succinate/malate CoA ligase beta subunit family. ATP-specific subunit beta subfamily. As to quaternary structure, heterodimer of an alpha and a beta subunit. The beta subunit determines specificity for ATP. Interacts with ALAS2.

The protein localises to the mitochondrion. The catalysed reaction is succinate + ATP + CoA = succinyl-CoA + ADP + phosphate. It functions in the pathway carbohydrate metabolism; tricarboxylic acid cycle; succinate from succinyl-CoA (ligase route): step 1/1. In terms of biological role, ATP-specific succinyl-CoA synthetase functions in the citric acid cycle (TCA), coupling the hydrolysis of succinyl-CoA to the synthesis of ATP and thus represents the only step of substrate-level phosphorylation in the TCA. The beta subunit provides nucleotide specificity of the enzyme and binds the substrate succinate, while the binding sites for coenzyme A and phosphate are found in the alpha subunit. The polypeptide is Succinate--CoA ligase [ADP-forming] subunit beta, mitochondrial (Mesocricetus auratus (Golden hamster)).